The primary structure comprises 452 residues: Maltoporin (452 aa).

The N-terminal stretch at 1-25 (MMITLRKLPLAVAVAAGVMSAQAMA) is a signal peptide.

This sequence belongs to the porin LamB (TC 1.B.3) family. In terms of assembly, homotrimer formed of three 18-stranded antiparallel beta-barrels, containing three independent channels.

It localises to the cell outer membrane. The catalysed reaction is beta-maltose(in) = beta-maltose(out). Involved in the transport of maltose and maltodextrins. This is Maltoporin from Salmonella choleraesuis (strain SC-B67).